Consider the following 142-residue polypeptide: Large ribosomal subunit protein uL11 (142 aa).

This sequence belongs to the universal ribosomal protein uL11 family. Part of the ribosomal stalk of the 50S ribosomal subunit. Interacts with L10 and the large rRNA to form the base of the stalk. L10 forms an elongated spine to which L12 dimers bind in a sequential fashion forming a multimeric L10(L12)X complex. One or more lysine residues are methylated.

Its function is as follows. Forms part of the ribosomal stalk which helps the ribosome interact with GTP-bound translation factors. This chain is Large ribosomal subunit protein uL11, found in Afipia carboxidovorans (strain ATCC 49405 / DSM 1227 / KCTC 32145 / OM5) (Oligotropha carboxidovorans).